A 206-amino-acid polypeptide reads, in one-letter code: Large ribosomal subunit protein uL4 (206 aa).

The tract at residues 43-78 (ARSGNRKQKDREEVKHTTKKPWRQKGTGRARAGMSS) is disordered. Basic and acidic residues predominate over residues 49–58 (KQKDREEVKH). Basic residues predominate over residues 59 to 70 (TTKKPWRQKGTG).

Belongs to the universal ribosomal protein uL4 family. In terms of assembly, part of the 50S ribosomal subunit.

Its function is as follows. One of the primary rRNA binding proteins, this protein initially binds near the 5'-end of the 23S rRNA. It is important during the early stages of 50S assembly. It makes multiple contacts with different domains of the 23S rRNA in the assembled 50S subunit and ribosome. In terms of biological role, forms part of the polypeptide exit tunnel. This is Large ribosomal subunit protein uL4 from Cupriavidus metallidurans (strain ATCC 43123 / DSM 2839 / NBRC 102507 / CH34) (Ralstonia metallidurans).